A 204-amino-acid chain; its full sequence is MSRGALIVFEGLDKSGKTTQCMNIMESIPSNTIKYLNFPQRSTVTGKMIDDYLTRKKTYNDHIVNLLFCANRWEFASFIQEQLEQGITLIVDRYAFSGVAYAAAKGASMTLSKSYESGLPKPDLVIFLESGSKEINRNVGEEIYEDVEFQQKVLQEYKKMIEEGDIHWQIISSEFEEDVKKELIKNIVIEAIHTVTGPVGQLWM.

ATP is bound at residue 11–18 (GLDKSGKT).

The protein belongs to the thymidylate kinase family.

The catalysed reaction is dTMP + ATP = dTDP + ADP. It participates in pyrimidine metabolism; dTTP biosynthesis. The polypeptide is Thymidylate kinase (TMK) (Cowpox virus (strain GRI-90 / Grishak) (CPV)).